The following is a 93-amino-acid chain: Integration host factor subunit beta (93 aa).

This sequence belongs to the bacterial histone-like protein family. As to quaternary structure, heterodimer of an alpha and a beta chain.

Functionally, this protein is one of the two subunits of integration host factor, a specific DNA-binding protein that functions in genetic recombination as well as in transcriptional and translational control. In Aliivibrio salmonicida (strain LFI1238) (Vibrio salmonicida (strain LFI1238)), this protein is Integration host factor subunit beta.